Consider the following 2090-residue polypeptide: Nuclear pore complex protein Nup205 (2090 aa).

This sequence belongs to the NUP186/NUP192/NUP205 family. Part of the nuclear pore complex (NPC).

The protein localises to the nucleus. The protein resides in the nuclear pore complex. Plays a role in the nuclear pore complex (NPC) assembly and maintenance, but with limited role in NPC permeability. Required for specific nuclear import pathways such as Mad import. The sequence is that of Nuclear pore complex protein Nup205 from Drosophila melanogaster (Fruit fly).